The chain runs to 81 residues: Bacteriochlorophyll c-binding protein (81 aa).

His25 lines the a bacteriochlorophyll c pocket.

It belongs to the BChl C/E-binding protein family.

It is found in the chlorosome. The protein resides in the chlorosome envelope. Its function is as follows. Component of the photosynthetic apparatus. The light harvesting B740 complex binds bacteriochlorophyll c. In Prosthecochloris aestuarii (strain DSM 271 / SK 413), this protein is Bacteriochlorophyll c-binding protein (csmA).